The following is a 412-amino-acid chain: MKAEIISVGTELLLGDILNTNAQYLSKKLAELGIFLYRQTVVGDNMDRILQAFDEAFKRSELVITTGGLGPTQDDLTKEAAAKFFSKKLVLHKPTLQAIKDYFKGREEYLTEGNLKQAYIPEGAIVLDNFYGTAPGCIIEDSGKILIILPGPPKEMEPMFETAVMPYLMKLQNCVLYSKVLRVFGMGECLVVEKIKEIIENQDNPTIAPYAKEGEVLLRITARADNKELAEGMIAPIEKQIREKLGEYIYGVGEESLEEIVVNLLRKTGLTISTAESCTGGLVASKIVNVAGVSKVFMEGIIAYSNEAKVKRLGVKKETLSKFGAVSEETAIEMASGIAKSAGTDIGLSITGIAGPTGGTPEKPVGLVYLGLYVNGKTAVKKLQLGGDRNKIRNRAAMFALDFVRRALLPLV.

This sequence belongs to the CinA family.

This Kosmotoga olearia (strain ATCC BAA-1733 / DSM 21960 / TBF 19.5.1) protein is CinA-like protein.